The primary structure comprises 248 residues: Small ribosomal subunit protein eS6 (248 aa).

A disordered region spans residues 215–248 (VQRKKESKAKREEAKRRRSASIRESKSSVSSDKK). Over residues 223 to 248 (AKREEAKRRRSASIRESKSSVSSDKK) the composition is skewed to basic and acidic residues. Phosphoserine is present on residues Ser-233, Ser-235, Ser-239, Ser-242, Ser-244, and Ser-245.

This sequence belongs to the eukaryotic ribosomal protein eS6 family. In terms of assembly, component of the small ribosomal subunit. Part of the small subunit (SSU) processome, composed of more than 70 proteins and the RNA chaperone small nucleolar RNA (snoRNA) U3. Post-translationally, ribosomal protein S6 is the major substrate of protein kinases in eukaryote ribosomes. The phosphorylation is stimulated by growth factors, tumor promoting agents, and mitogens. It is dephosphorylated at growth arrest.

The protein localises to the cytoplasm. It is found in the nucleus. The protein resides in the nucleolus. Functionally, component of the 40S small ribosomal subunit. Plays an important role in controlling cell growth and proliferation through the selective translation of particular classes of mRNA. Part of the small subunit (SSU) processome, first precursor of the small eukaryotic ribosomal subunit. During the assembly of the SSU processome in the nucleolus, many ribosome biogenesis factors, an RNA chaperone and ribosomal proteins associate with the nascent pre-rRNA and work in concert to generate RNA folding, modifications, rearrangements and cleavage as well as targeted degradation of pre-ribosomal RNA by the RNA exosome. This chain is Small ribosomal subunit protein eS6 (RpS6), found in Drosophila melanogaster (Fruit fly).